A 946-amino-acid chain; its full sequence is Ent-kaur-16-ene synthase (946 aa).

Mg(2+) contacts are provided by D656, E660, N839, D840, S843, and D847. A DEXXE motif motif is present at residues 656-660 (DEFFE).

This sequence belongs to the terpene synthase family. Mg(2+) serves as cofactor.

The enzyme catalyses ent-copalyl diphosphate = ent-kaur-16-ene + diphosphate. It carries out the reaction (2E,6E,10E)-geranylgeranyl diphosphate = ent-copalyl diphosphate. The protein operates within plant hormone biosynthesis; gibberellin biosynthesis. Functionally, catalyzes the conversion of geranylgeranyl diphosphate to the gibberellin precursor ent-kaurene diphosphate in a two step process. In Phaeosphaeria sp. (strain L487), this protein is Ent-kaur-16-ene synthase.